The following is a 193-amino-acid chain: Bcl-2-like protein 2 (193 aa).

Alanine 2 is modified (N-acetylalanine). A BH4 motif is present at residues 9 to 29; sequence DTRALVADFVGYKLRQKGYVC. Positions 85–104 match the BH1 motif; sequence ELFQGGPNWGRLVAFFVFGA. A BH2 motif is present at residues 136–151; that stretch reads DWIHSSGGWAEFTALY. At alanine 177 the chain carries Phosphoserine.

This sequence belongs to the Bcl-2 family. As to quaternary structure, interacts with HIF3A (via C-terminus domain). Interacts with BOP. Expressed (at protein level) in a wide range of tissues with highest levels in brain, spinal cord, testis, pancreas, heart, spleen and mammary glands. Moderate levels found in thymus, ovary and small intestine. Not detected in salivary gland, muscle or liver. Also expressed in cell lines of myeloid, fibroblast and epithelial origin. Not detected in most lymphoid cell lines.

It localises to the mitochondrion membrane. Its function is as follows. Promotes cell survival. Blocks dexamethasone-induced apoptosis. Mediates survival of postmitotic Sertoli cells by suppressing death-promoting activity of BAX. In Homo sapiens (Human), this protein is Bcl-2-like protein 2 (BCL2L2).